We begin with the raw amino-acid sequence, 258 residues long: Small ribosomal subunit protein mS35 (258 aa).

The transit peptide at 1–39 directs the protein to the mitochondrion; the sequence is MAFNPLLSLLKADAIFLGQLSKSSFCATSRAFSVFYFTR.

Belongs to the mitochondrion-specific ribosomal protein mS35 family. Component of the mitochondrial small ribosomal subunit (mt-SSU). Mature yeast 74S mitochondrial ribosomes consist of a small (37S) and a large (54S) subunit. The 37S small subunit contains a 15S ribosomal RNA (15S mt-rRNA) and at least 32 different proteins. The 54S large subunit contains a 21S rRNA (21S mt-rRNA) and at least 45 different proteins.

Its subcellular location is the mitochondrion. In terms of biological role, component of the mitochondrial ribosome (mitoribosome), a dedicated translation machinery responsible for the synthesis of mitochondrial genome-encoded proteins, including at least some of the essential transmembrane subunits of the mitochondrial respiratory chain. The mitoribosomes are attached to the mitochondrial inner membrane and translation products are cotranslationally integrated into the membrane. In Schizosaccharomyces pombe (strain 972 / ATCC 24843) (Fission yeast), this protein is Small ribosomal subunit protein mS35 (rsm24).